Consider the following 469-residue polypeptide: Acetyl-CoA decarbonylase/synthase complex subunit beta 1 (469 aa).

4 residues coordinate [Ni-Fe-S] cluster: C189, C192, C278, and C280.

This sequence belongs to the CdhC family. In terms of assembly, monomer. The ACDS complex is made up of alpha, epsilon, beta, gamma and delta chains with a probable stoichiometry of (alpha(2)epsilon(2))(4)-beta(8)-(gamma(1)delta(1))(8) (Potential). It depends on [Ni-Fe-S] cluster as a cofactor.

The enzyme catalyses Co(I)-[corrinoid Fe-S protein] + acetyl-CoA + H(+) = methyl-Co(III)-[corrinoid Fe-S protein] + CO + CoA. It participates in one-carbon metabolism; methanogenesis from acetate. In terms of biological role, part of a complex that catalyzes the reversible cleavage of acetyl-CoA, allowing growth on acetate as sole source of carbon and energy. The alpha-epsilon complex generates CO from CO(2), while the beta subunit (this protein) combines the CO with CoA and a methyl group to form acetyl-CoA. The methyl group, which is incorporated into acetyl-CoA, is transferred to the beta subunit by a corrinoid iron-sulfur protein (the gamma-delta complex). The polypeptide is Acetyl-CoA decarbonylase/synthase complex subunit beta 1 (cdhC1) (Methanosarcina mazei (strain ATCC BAA-159 / DSM 3647 / Goe1 / Go1 / JCM 11833 / OCM 88) (Methanosarcina frisia)).